Here is a 322-residue protein sequence, read N- to C-terminus: F-box protein At2g16300 (322 aa).

The F-box domain maps to Ala-2–Ile-50.

This Arabidopsis thaliana (Mouse-ear cress) protein is F-box protein At2g16300.